The chain runs to 725 residues: Prolyl 3-hydroxylase 1 (725 aa).

A signal peptide spans 1–14 (MALLLPLLPLLVWA). A TPR 1 repeat occupies 36-69 (PDALFAAGAEAYARGDWPAVVLQMERALRARAAI). An N-linked (GlcNAc...) asparagine glycan is attached at Asn-82. TPR repeat units lie at residues 136 to 169 (RSPY…NPEH), 198 to 231 (HMTE…YFVA), and 294 to 327 (PSHF…FPND). Residues 394–441 (KRLREKQKVERETAARISEEIGNLMKEIETLVEEKAKESAEMSKFIRE) adopt a coiled-coil conformation. N-linked (GlcNAc...) asparagine glycans are attached at residues Asn-460 and Asn-533. In terms of domain architecture, Fe2OG dioxygenase spans 557-671 (SHLVCRTAID…RCAIALWFTL (115 aa)). Fe cation-binding residues include His-580, Asp-582, and His-652. Arg-662 is a catalytic residue. Residues 701–715 (ETSAEQEPTAATSTA) are compositionally biased toward polar residues. The segment at 701 to 725 (ETSAEQEPTAATSTAGLHAAGKDEL) is disordered. A Prevents secretion from ER motif is present at residues 722–725 (KDEL).

This sequence belongs to the leprecan family. Binds unfolded collagen in a complex with CYPB and CRTAP. It depends on Fe cation as a cofactor. Requires L-ascorbate as cofactor. In terms of tissue distribution, expressed in embryonic dermis, tendon, cartilage, liver and kidney. Expression in the kidney is restricted to the calyx. In the liver, expression is restricted to the interlobular septum.

The protein localises to the endoplasmic reticulum. The catalysed reaction is L-prolyl-[collagen] + 2-oxoglutarate + O2 = trans-3-hydroxy-L-prolyl-[collagen] + succinate + CO2. Its function is as follows. Has prolyl 3-hydroxylase activity catalyzing the post-translational formation of 3-hydroxyproline in -Xaa-Pro-Gly-sequences in collagens, especially types IV and V. May be involved in the secretoty pathway of cells. Has growth suppressive activity in fibroblasts. The polypeptide is Prolyl 3-hydroxylase 1 (Gallus gallus (Chicken)).